The following is a 156-amino-acid chain: Cyanate hydratase (156 aa).

Residues Arg96, Glu99, and Ser122 contribute to the active site.

The protein belongs to the cyanase family.

It carries out the reaction cyanate + hydrogencarbonate + 3 H(+) = NH4(+) + 2 CO2. In terms of biological role, catalyzes the reaction of cyanate with bicarbonate to produce ammonia and carbon dioxide. This Pseudomonas paraeruginosa (strain DSM 24068 / PA7) (Pseudomonas aeruginosa (strain PA7)) protein is Cyanate hydratase.